We begin with the raw amino-acid sequence, 236 residues long: Ribonuclease 3 (236 aa).

In terms of domain architecture, RNase III spans 8–130 (FRRLSQALDY…TFAAVSFDAD (123 aa)). A Mg(2+)-binding site is contributed by Glu43. Asp47 is a catalytic residue. 2 residues coordinate Mg(2+): Asp116 and Glu119. Residue Glu119 is part of the active site. The DRBM domain maps to 157–227 (DAKTRLQEAL…AEAALTLLEQ (71 aa)).

It belongs to the ribonuclease III family. Homodimer. Mg(2+) is required as a cofactor.

It localises to the cytoplasm. The catalysed reaction is Endonucleolytic cleavage to 5'-phosphomonoester.. Digests double-stranded RNA. Involved in the processing of primary rRNA transcript to yield the immediate precursors to the large and small rRNAs (23S and 16S). Processes some mRNAs, and tRNAs when they are encoded in the rRNA operon. Processes pre-crRNA and tracrRNA of type II CRISPR loci if present in the organism. This is Ribonuclease 3 from Chromobacterium violaceum (strain ATCC 12472 / DSM 30191 / JCM 1249 / CCUG 213 / NBRC 12614 / NCIMB 9131 / NCTC 9757 / MK).